The following is a 78-amino-acid chain: NAD(P)H-quinone oxidoreductase subunit L (78 aa).

The next 2 membrane-spanning stretches (helical) occupy residues 10–30 (IILIIYAALAGAYFLVMPAIV) and 47–67 (VFMYFLMFLFFPGMLVLSPFL).

The protein belongs to the complex I NdhL subunit family. As to quaternary structure, NDH-1 can be composed of about 15 different subunits; different subcomplexes with different compositions have been identified which probably have different functions.

The protein resides in the cellular thylakoid membrane. The catalysed reaction is a plastoquinone + NADH + (n+1) H(+)(in) = a plastoquinol + NAD(+) + n H(+)(out). The enzyme catalyses a plastoquinone + NADPH + (n+1) H(+)(in) = a plastoquinol + NADP(+) + n H(+)(out). Functionally, NDH-1 shuttles electrons from an unknown electron donor, via FMN and iron-sulfur (Fe-S) centers, to quinones in the respiratory and/or the photosynthetic chain. The immediate electron acceptor for the enzyme in this species is believed to be plastoquinone. Couples the redox reaction to proton translocation, and thus conserves the redox energy in a proton gradient. Cyanobacterial NDH-1 also plays a role in inorganic carbon-concentration. The sequence is that of NAD(P)H-quinone oxidoreductase subunit L from Trichodesmium erythraeum (strain IMS101).